A 97-amino-acid polypeptide reads, in one-letter code: MANIKSAIKRIQIAERNRLRNKSYKSAVKTLMKKYYAAVEDYKANPSEEAKKAVDQAMSAAYSKIDKAVKCRILHRNNGARKKSQLANALKQVTTAS.

It belongs to the bacterial ribosomal protein bS20 family.

Its function is as follows. Binds directly to 16S ribosomal RNA. This is Small ribosomal subunit protein bS20 from Gloeothece citriformis (strain PCC 7424) (Cyanothece sp. (strain PCC 7424)).